Here is a 232-residue protein sequence, read N- to C-terminus: Sugar fermentation stimulation protein homolog (232 aa).

Belongs to the SfsA family.

The chain is Sugar fermentation stimulation protein homolog from Pyrobaculum arsenaticum (strain DSM 13514 / JCM 11321 / PZ6).